The following is a 230-amino-acid chain: Somatolactin (230 aa).

The first 25 residues, 1 to 25 (MHTKVLQQGLWALLLWPHLFTVSVP), serve as a signal peptide directing secretion. Intrachain disulfides connect cysteine 28–cysteine 38, cysteine 88–cysteine 204, and cysteine 221–cysteine 229. N-linked (GlcNAc...) asparagine glycosylation is present at asparagine 144.

This sequence belongs to the somatotropin/prolactin family.

It localises to the secreted. Its function is as follows. Selectively regulates proliferation and morphogenesis of neural-crest derived pigment cells. In Oryzias latipes (Japanese rice fish), this protein is Somatolactin.